Consider the following 287-residue polypeptide: Nucleotide-binding protein Ajs_0902 (287 aa).

An ATP-binding site is contributed by 10–17 (GMSGSGKS). Residue 59-62 (DVRS) participates in GTP binding.

Belongs to the RapZ-like family.

Displays ATPase and GTPase activities. The polypeptide is Nucleotide-binding protein Ajs_0902 (Acidovorax sp. (strain JS42)).